Here is a 300-residue protein sequence, read N- to C-terminus: Nucleotide-binding protein MCCL_0516 (300 aa).

ATP is bound at residue 15 to 22; it reads GMSGAGKS. GTP is bound at residue 66-69; that stretch reads DLRG.

This sequence belongs to the RapZ-like family.

In terms of biological role, displays ATPase and GTPase activities. The polypeptide is Nucleotide-binding protein MCCL_0516 (Macrococcus caseolyticus (strain JCSC5402) (Macrococcoides caseolyticum)).